The following is a 575-amino-acid chain: Urease subunit alpha (575 aa).

The Urease domain maps to Gly-138–Phe-575. 3 residues coordinate Ni(2+): His-143, His-145, and Lys-226. Lys-226 is modified (N6-carboxylysine). His-228 is a binding site for substrate. Positions 255 and 281 each coordinate Ni(2+). His-329 functions as the Proton donor in the catalytic mechanism. Residue Asp-369 coordinates Ni(2+).

Belongs to the metallo-dependent hydrolases superfamily. Urease alpha subunit family. As to quaternary structure, heterotrimer of UreA (gamma), UreB (beta) and UreC (alpha) subunits. Three heterotrimers associate to form the active enzyme. Ni cation serves as cofactor. Post-translationally, carboxylation allows a single lysine to coordinate two nickel ions.

It is found in the cytoplasm. It catalyses the reaction urea + 2 H2O + H(+) = hydrogencarbonate + 2 NH4(+). Its pathway is nitrogen metabolism; urea degradation; CO(2) and NH(3) from urea (urease route): step 1/1. This is Urease subunit alpha from Frankia casuarinae (strain DSM 45818 / CECT 9043 / HFP020203 / CcI3).